The primary structure comprises 250 residues: ATP synthase subunit a (250 aa).

6 consecutive transmembrane segments (helical) span residues 29–49 (ASLFMVASAVLSAGFLYFATS), 84–104 (FFPLVFSLFMFVLTANLLGMV), 114–134 (IIVTFALALLVILTVILYGFI), 143–163 (LFVPQGVPGILLPLVVIIEII), 185–205 (ITLKVFAGFVASLGTLGALGI), and 208–228 (AILPLIMTVALTGLEFLVAFL).

The protein belongs to the ATPase A chain family. In terms of assembly, F-type ATPases have 2 components, CF(1) - the catalytic core - and CF(0) - the membrane proton channel. CF(1) has five subunits: alpha(3), beta(3), gamma(1), delta(1), epsilon(1). CF(0) has three main subunits: a(1), b(2) and c(9-12). The alpha and beta chains form an alternating ring which encloses part of the gamma chain. CF(1) is attached to CF(0) by a central stalk formed by the gamma and epsilon chains, while a peripheral stalk is formed by the delta and b chains.

It is found in the cell inner membrane. Its function is as follows. Key component of the proton channel; it plays a direct role in the translocation of protons across the membrane. This chain is ATP synthase subunit a, found in Rhizobium rhizogenes (strain K84 / ATCC BAA-868) (Agrobacterium radiobacter).